The sequence spans 302 residues: Mas-related G-protein coupled receptor member A3 (302 aa).

The Extracellular portion of the chain corresponds to 1–17 (MNETIPGSIDIETLIPD). Asn2 is a glycosylation site (N-linked (GlcNAc...) asparagine). Residues 18-38 (LMIIIFGLVGLTGNAIVFWLL) form a helical membrane-spanning segment. At 39–46 (GFRMHRTA) the chain is on the cytoplasmic side. A helical transmembrane segment spans residues 47–67 (FLVYILNLALADFLFLLCHII). N-linked (GlcNAc...) asparagine glycosylation is present at Asn68. The Extracellular segment spans residues 68-81 (NSTVDLLKFTLPKG). The helical transmembrane segment at 82–102 (IFAFCFHTIKRVLYITGLSML) threads the bilayer. Residues 103–129 (SAISTERCLSVLCPIWYHCRRPEHTST) are Cytoplasmic-facing. The helical transmembrane segment at 130–150 (VMCAVIWVLSLLICILDGYFC) threads the bilayer. Residues 151-167 (GYLDNHYFNYSVCQAWD) lie on the Extracellular side of the membrane. The N-linked (GlcNAc...) asparagine glycan is linked to Asn159. The helical transmembrane segment at 168-188 (IFIGAYLMFLFVVLCLSTLAL) threads the bilayer. The Cytoplasmic portion of the chain corresponds to 189–211 (LARLFCGARNMKFTRLFVTIMLT). A helical transmembrane segment spans residues 212–232 (VLVFLLCGLPWGITWFLLFWI). Residues 233–242 (APGVFVLDYS) are Extracellular-facing. The helical transmembrane segment at 243–263 (PLLVLTAINSCANPIIYFFVG) threads the bilayer. Over 264 to 302 (SFRQRLNKQTLKMVLQKALQDTPETPENMVEMSRNKAEP) the chain is Cytoplasmic.

This sequence belongs to the G-protein coupled receptor 1 family. Mas subfamily. In terms of tissue distribution, expressed exclusively in dorsal root ganglia and nodose ganglia. Expressed in a subset of sensory neurons that includes nociceptors. Expressed in the subclass of non-peptidergic sensory neurons that are IB4(+) and VR1(-).

It is found in the cell membrane. Functionally, orphan receptor. May be a receptor for RFamide-family neuropeptides such as NPFF and NPAF, which are analgesic in vivo. May regulate nociceptor function and/or development, including the sensation or modulation of pain. Activated by the antimalarial drug chloroquine. Mediates chloroquine-induced itch, in a histamine-independent manner. This is Mas-related G-protein coupled receptor member A3 (Mrgpra3) from Mus musculus (Mouse).